A 440-amino-acid chain; its full sequence is Xylose isomerase (440 aa).

Residues His-101 and Asp-104 contribute to the active site. 7 residues coordinate Mg(2+): Glu-232, Glu-268, His-271, Asp-296, Asp-307, Asp-309, and Asp-339.

This sequence belongs to the xylose isomerase family. In terms of assembly, homotetramer. Requires Mg(2+) as cofactor.

It is found in the cytoplasm. It carries out the reaction alpha-D-xylose = alpha-D-xylulofuranose. The protein is Xylose isomerase of Escherichia coli O157:H7.